A 206-amino-acid chain; its full sequence is Probable GTP-binding protein EngB (206 aa).

One can recognise an EngB-type G domain in the interval 23–197 (QGIEVAFAGR…ERVLDKWFGY (175 aa)). Residues 31–38 (GRSNAGKS), 58–62 (GRTQL), 76–79 (DLPG), 143–146 (TKAD), and 176–178 (FSS) each bind GTP. The Mg(2+) site is built by serine 38 and threonine 60.

It belongs to the TRAFAC class TrmE-Era-EngA-EngB-Septin-like GTPase superfamily. EngB GTPase family. Requires Mg(2+) as cofactor.

Its function is as follows. Necessary for normal cell division and for the maintenance of normal septation. This chain is Probable GTP-binding protein EngB, found in Pseudoalteromonas atlantica (strain T6c / ATCC BAA-1087).